The sequence spans 83 residues: Bublin coiled-coil protein (83 aa).

The disordered stretch occupies residues 1–24 (MSGPNGDLGMPVEAGAEGEEDGFG). A coiled-coil region spans residues 25-74 (EAEYAAINSMLDQINSCLDHLEEKNDHLHARLQELLESNRQTRLEFQQQL). Phosphoserine is present on serine 82.

The protein belongs to the UPF0184 (EST00098) family.

The protein localises to the cell junction. It localises to the cytoplasm. It is found in the cytoskeleton. Its function is as follows. Essential for intermediate filament organization in intestinal cells, interacts with intermediate filament and regulates intestinal lumen morphology. This chain is Bublin coiled-coil protein, found in Homo sapiens (Human).